The following is a 462-amino-acid chain: 3-isopropylmalate dehydratase large subunit (462 aa).

[4Fe-4S] cluster contacts are provided by cysteine 337, cysteine 397, and cysteine 400.

Belongs to the aconitase/IPM isomerase family. LeuC type 1 subfamily. In terms of assembly, heterodimer of LeuC and LeuD. Requires [4Fe-4S] cluster as cofactor.

The catalysed reaction is (2R,3S)-3-isopropylmalate = (2S)-2-isopropylmalate. It functions in the pathway amino-acid biosynthesis; L-leucine biosynthesis; L-leucine from 3-methyl-2-oxobutanoate: step 2/4. Catalyzes the isomerization between 2-isopropylmalate and 3-isopropylmalate, via the formation of 2-isopropylmaleate. This chain is 3-isopropylmalate dehydratase large subunit, found in Listeria monocytogenes serotype 4a (strain HCC23).